Here is a 260-residue protein sequence, read N- to C-terminus: UPF0246 protein BPSL1241 (260 aa).

The protein belongs to the UPF0246 family.

The protein is UPF0246 protein BPSL1241 of Burkholderia pseudomallei (strain K96243).